We begin with the raw amino-acid sequence, 311 residues long: 4-hydroxy-tetrahydrodipicolinate synthase (311 aa).

Threonine 51 contacts pyruvate. Catalysis depends on tyrosine 140, which acts as the Proton donor/acceptor. Catalysis depends on lysine 168, which acts as the Schiff-base intermediate with substrate. Pyruvate is bound at residue isoleucine 209.

This sequence belongs to the DapA family. Homotetramer; dimer of dimers.

It localises to the cytoplasm. It catalyses the reaction L-aspartate 4-semialdehyde + pyruvate = (2S,4S)-4-hydroxy-2,3,4,5-tetrahydrodipicolinate + H2O + H(+). Its pathway is amino-acid biosynthesis; L-lysine biosynthesis via DAP pathway; (S)-tetrahydrodipicolinate from L-aspartate: step 3/4. Its function is as follows. Catalyzes the condensation of (S)-aspartate-beta-semialdehyde [(S)-ASA] and pyruvate to 4-hydroxy-tetrahydrodipicolinate (HTPA). The sequence is that of 4-hydroxy-tetrahydrodipicolinate synthase from Streptococcus pneumoniae (strain Taiwan19F-14).